Here is a 625-residue protein sequence, read N- to C-terminus: Glutamyl-tRNA(Gln) amidotransferase subunit E (625 aa).

It belongs to the GatB/GatE family. GatE subfamily. As to quaternary structure, heterodimer of GatD and GatE.

It catalyses the reaction L-glutamyl-tRNA(Gln) + L-glutamine + ATP + H2O = L-glutaminyl-tRNA(Gln) + L-glutamate + ADP + phosphate + H(+). Functionally, allows the formation of correctly charged Gln-tRNA(Gln) through the transamidation of misacylated Glu-tRNA(Gln) in organisms which lack glutaminyl-tRNA synthetase. The reaction takes place in the presence of glutamine and ATP through an activated gamma-phospho-Glu-tRNA(Gln). The GatDE system is specific for glutamate and does not act on aspartate. This chain is Glutamyl-tRNA(Gln) amidotransferase subunit E, found in Caldivirga maquilingensis (strain ATCC 700844 / DSM 13496 / JCM 10307 / IC-167).